Reading from the N-terminus, the 274-residue chain is Penicillin-insensitive murein endopeptidase (274 aa).

Residues 1–19 (MNKTAIALLALLASSASLA) form the signal peptide. 3 disulfide bridges follow: Cys-44-Cys-265, Cys-187-Cys-235, and Cys-216-Cys-223. Residues His-110, His-113, Asp-120, Asp-147, His-150, and His-211 each contribute to the Zn(2+) site. Residues 228–274 (LPPSGDGCGAELQSWFEPPKPGTTKPEKKTPPPLPPSCQALLDEHVI) form a disordered region.

This sequence belongs to the peptidase M74 family. As to quaternary structure, dimer. Zn(2+) is required as a cofactor.

Its subcellular location is the periplasm. Inhibited by Zn(2+) at 10 mM and by metal chelating agents EDTA and 1,10-phenanthroline. In terms of biological role, murein endopeptidase that cleaves the D-alanyl-meso-2,6-diamino-pimelyl amide bond that connects peptidoglycan strands. Likely plays a role in the removal of murein from the sacculus and could also play a role in the integration of nascent murein strands into the sacculus. This Escherichia coli (strain K12) protein is Penicillin-insensitive murein endopeptidase (mepA).